We begin with the raw amino-acid sequence, 593 residues long: NADH-quinone oxidoreductase subunit C/D (593 aa).

Positions 1–184 (MTADNAIFIP…DPYSLTLAKQ (184 aa)) are NADH dehydrogenase I subunit C. The NADH dehydrogenase I subunit D stretch occupies residues 208-593 (DYMFLNLGPN…IDFVMADVDR (386 aa)).

It in the N-terminal section; belongs to the complex I 30 kDa subunit family. In the C-terminal section; belongs to the complex I 49 kDa subunit family. As to quaternary structure, NDH-1 is composed of 13 different subunits. Subunits NuoB, CD, E, F, and G constitute the peripheral sector of the complex.

Its subcellular location is the cell inner membrane. It catalyses the reaction a quinone + NADH + 5 H(+)(in) = a quinol + NAD(+) + 4 H(+)(out). NDH-1 shuttles electrons from NADH, via FMN and iron-sulfur (Fe-S) centers, to quinones in the respiratory chain. The immediate electron acceptor for the enzyme in this species is believed to be ubiquinone. Couples the redox reaction to proton translocation (for every two electrons transferred, four hydrogen ions are translocated across the cytoplasmic membrane), and thus conserves the redox energy in a proton gradient. In Pseudomonas putida (strain W619), this protein is NADH-quinone oxidoreductase subunit C/D.